We begin with the raw amino-acid sequence, 132 residues long: MSGKGKVHGGKGKSSETAKSTTSHSARAGLQFPVGRIKRYLKRTAQNKIRVGSKSAIYLTAVLEYLTAEVLELAGNAAKDLKVKRITPRHLQLAIRGDEELDNLIKATIAFGGVLPHINKALLLKVEKKKQK.

Residues 1–11 show a composition bias toward basic residues; the sequence is MSGKGKVHGGK. A disordered region spans residues 1-27; the sequence is MSGKGKVHGGKGKSSETAKSTTSHSAR. Serine 2 bears the N-acetylserine mark. N6-acetyllysine occurs at positions 4, 11, and 13.

The protein belongs to the histone H2A family. The nucleosome is a histone octamer containing two molecules each of H2A, H2B, H3 and H4 assembled in one H3-H4 heterotetramer and two H2A-H2B heterodimers. The octamer wraps approximately 147 bp of DNA. H2A or its variant H2A.Z forms a heterodimer with H2B. H2A.Z associates with the VPS72/SWC2 subunit of the SWR1 chromatin remodeling complex. Also interacts with RBP1/DNA-directed RNA polymerase II largest subunit. In terms of processing, acetylated once deposited into chromatin.

The protein resides in the nucleus. It is found in the chromosome. In terms of biological role, variant histone H2A which can replace H2A in some nucleosomes. Nucleosomes wrap and compact DNA into chromatin, limiting DNA accessibility to the cellular machineries which require DNA as a template. Histones thereby play a central role in transcription regulation, DNA repair, DNA replication and chromosomal stability. DNA accessibility is regulated via a complex set of post-translational modifications of histones, also called histone code, and nucleosome remodeling. This variant is enriched at promoters, it may keep them in a repressed state until the appropriate activation signal is received. Near telomeres, it may counteract gene silencing caused by the spread of heterochromatin proteins. Required for the RNA polymerase II and SPT15/TBP recruitment to the target genes. Involved in chromosome stability. The sequence is that of Histone H2A.Z (HTZ1) from Debaryomyces hansenii (strain ATCC 36239 / CBS 767 / BCRC 21394 / JCM 1990 / NBRC 0083 / IGC 2968) (Yeast).